The primary structure comprises 162 residues: Auxin-responsive protein SAUR36 (162 aa).

The protein belongs to the ARG7 family. As to expression, expressed in embryo, endosperm, growing hypocotyls and shoot apical meristems.

Acts a positive regulator of leaf senescence and may mediate auxin-induced leaf senescence. Plays a role in the regulation of seed germination by gibberellins and abscisic acid (ABA). Plays a role in the regulation of light-dependent hypocotyl elongation. The polypeptide is Auxin-responsive protein SAUR36 (Arabidopsis thaliana (Mouse-ear cress)).